The sequence spans 316 residues: UDP-3-O-acylglucosamine N-acyltransferase 2 (316 aa).

The Proton acceptor role is filled by His-230.

It belongs to the transferase hexapeptide repeat family. LpxD subfamily. As to quaternary structure, homotrimer.

The catalysed reaction is a UDP-3-O-[(3R)-3-hydroxyacyl]-alpha-D-glucosamine + a (3R)-hydroxyacyl-[ACP] = a UDP-2-N,3-O-bis[(3R)-3-hydroxyacyl]-alpha-D-glucosamine + holo-[ACP] + H(+). It functions in the pathway bacterial outer membrane biogenesis; LPS lipid A biosynthesis. Functionally, catalyzes the N-acylation of UDP-3-O-acylglucosamine using 3-hydroxyacyl-ACP as the acyl donor. Is involved in the biosynthesis of lipid A, a phosphorylated glycolipid that anchors the lipopolysaccharide to the outer membrane of the cell. This is UDP-3-O-acylglucosamine N-acyltransferase 2 from Sulfurimonas denitrificans (strain ATCC 33889 / DSM 1251) (Thiomicrospira denitrificans (strain ATCC 33889 / DSM 1251)).